A 199-amino-acid chain; its full sequence is Recombination protein RecR (199 aa).

A C4-type zinc finger spans residues 57-72 (CSICFNLTDTDPCAIC). A Toprim domain is found at 80–175 (RLLMVVEEAK…KVTRIAHGLP (96 aa)).

This sequence belongs to the RecR family.

Its function is as follows. May play a role in DNA repair. It seems to be involved in an RecBC-independent recombinational process of DNA repair. It may act with RecF and RecO. The chain is Recombination protein RecR from Carboxydothermus hydrogenoformans (strain ATCC BAA-161 / DSM 6008 / Z-2901).